We begin with the raw amino-acid sequence, 657 residues long: MKDIGAAQETRMANAIRALAMDAVEKAKSGHPGMPMGMADVATVLFNRFLTVDPSAPKWPDRDRFVLSAGHGSMLLYAIHHLLGYADMDMDQIRSFRQLGARTAGHPEYGHAEGIEVTTGPLGQGIATAVGMALAERMKNARYGDDLVDHFTYVIAGDGCLMEGISHEAIDMGGHLGLGRLIVLWDDNRITIDGDSGISTSTDQKAPFAASGWHVLACDGHAPEEIAAAIEAARRDPRPSMIACRTVIGYGAPNKQGGHDVHGAPLGAAEIAAARERLGWDHPPFEIPADLYEAWGRIAARGADARAAWETRLQASPLRAAFETAEAADTSALPPAIAAYKARLSAEAPKVATRKASEMALGVVNEALPFAVGGSADLTGSNLTRSKGMVSVAPGAFAGSYIHYGIREHGMAAAMNGIALHGGLRPYGGTFMAFADYCRPSIRLSALMGVPVTYVMTHDSIGLGEDGPTHQPVEHLASLRAIPNLAVIRPADAVETAEAWEIAMTATSTPTLLVLSRQNLPTVRTEHRDENLTARGAYLLRDPGERQVTLIATGSELELALAAADLLAAEGIAAAVVSAPCFELFAAQPADYRATVLGRAPRVGCEAALRQGWDLFLGPQDGFVGMTGFGASAPAPALYQHFNITAEAIVKSAKERI.

Position 31 (His31) interacts with substrate. Residues His71 and 120–122 each bind thiamine diphosphate; that span reads GPL. Asp158 is a binding site for Mg(2+). Gly159 and Asn188 together coordinate thiamine diphosphate. Mg(2+)-binding residues include Asn188 and Ile190. Residues His262, Arg354, and Ser381 each coordinate substrate. Position 262 (His262) interacts with thiamine diphosphate. Glu408 acts as the Proton donor in catalysis. Phe434 serves as a coordination point for thiamine diphosphate. Positions 458, 466, and 517 each coordinate substrate.

Belongs to the transketolase family. Homodimer. It depends on Mg(2+) as a cofactor. Ca(2+) is required as a cofactor. The cofactor is Mn(2+). Requires Co(2+) as cofactor. Thiamine diphosphate serves as cofactor.

It catalyses the reaction D-sedoheptulose 7-phosphate + D-glyceraldehyde 3-phosphate = aldehydo-D-ribose 5-phosphate + D-xylulose 5-phosphate. Its pathway is carbohydrate biosynthesis; Calvin cycle. The protein operates within carbohydrate degradation; pentose phosphate pathway. Catalyzes the transfer of a two-carbon ketol group from a ketose donor to an aldose acceptor, via a covalent intermediate with the cofactor thiamine pyrophosphate. This Cereibacter sphaeroides (Rhodobacter sphaeroides) protein is Transketolase (tklB).